A 155-amino-acid chain; its full sequence is Ribosomal RNA large subunit methyltransferase H (155 aa).

Residues Leu-73, Gly-104, and 123-128 (LSRMTF) each bind S-adenosyl-L-methionine.

This sequence belongs to the RNA methyltransferase RlmH family. In terms of assembly, homodimer.

It is found in the cytoplasm. It carries out the reaction pseudouridine(1915) in 23S rRNA + S-adenosyl-L-methionine = N(3)-methylpseudouridine(1915) in 23S rRNA + S-adenosyl-L-homocysteine + H(+). Specifically methylates the pseudouridine at position 1915 (m3Psi1915) in 23S rRNA. This chain is Ribosomal RNA large subunit methyltransferase H, found in Methylococcus capsulatus (strain ATCC 33009 / NCIMB 11132 / Bath).